The following is a 917-amino-acid chain: Protein translocase subunit SecA (917 aa).

Residues Gln87, 105–109 (GEGKT), and Asp501 contribute to the ATP site. Positions 901, 903, 912, and 913 each coordinate Zn(2+).

It belongs to the SecA family. In terms of assembly, monomer and homodimer. Part of the essential Sec protein translocation apparatus which comprises SecA, SecYEG and auxiliary proteins SecDF-YajC and YidC. The cofactor is Zn(2+).

The protein localises to the cell inner membrane. Its subcellular location is the cytoplasm. It catalyses the reaction ATP + H2O + cellular proteinSide 1 = ADP + phosphate + cellular proteinSide 2.. Functionally, part of the Sec protein translocase complex. Interacts with the SecYEG preprotein conducting channel. Has a central role in coupling the hydrolysis of ATP to the transfer of proteins into and across the cell membrane, serving both as a receptor for the preprotein-SecB complex and as an ATP-driven molecular motor driving the stepwise translocation of polypeptide chains across the membrane. In Granulibacter bethesdensis (strain ATCC BAA-1260 / CGDNIH1), this protein is Protein translocase subunit SecA.